A 437-amino-acid polypeptide reads, in one-letter code: tRNA(Ile2) 2-agmatinylcytidine synthetase TiaS (437 aa).

It belongs to the TiaS family.

The protein localises to the cytoplasm. It catalyses the reaction cytidine(34) in tRNA(Ile2) + agmatine + ATP + H2O = 2-agmatinylcytidine(34) in tRNA(Ile2) + AMP + 2 phosphate + 2 H(+). ATP-dependent agmatine transferase that catalyzes the formation of 2-agmatinylcytidine (agm2C) at the wobble position (C34) of tRNA(Ile2), converting the codon specificity from AUG to AUA. This chain is tRNA(Ile2) 2-agmatinylcytidine synthetase TiaS, found in Acidilobus saccharovorans (strain DSM 16705 / JCM 18335 / VKM B-2471 / 345-15).